Consider the following 369-residue polypeptide: UPF0754 membrane protein Aflv_2299 (369 aa).

2 helical membrane-spanning segments follow: residues 1–21 and 347–367; these read MGLF…GGMT and YLGA…TFFV.

Belongs to the UPF0754 family.

The protein resides in the cell membrane. The polypeptide is UPF0754 membrane protein Aflv_2299 (Anoxybacillus flavithermus (strain DSM 21510 / WK1)).